Reading from the N-terminus, the 573-residue chain is Protein FAM227B (573 aa).

Residues 429-485 (DNKKDFKRVKQRIKDDIKFLKEQQEQIDKELDRLQAKASKNLQEVKNDFENFLHKLR) are a coiled coil. Positions 497-521 (SASPSESLQSLQSPNSSLSSPAMSE) are enriched in low complexity. A disordered region spans residues 497 to 528 (SASPSESLQSLQSPNSSLSSPAMSEDFNSVEE).

The protein belongs to the FAM227 family.

This chain is Protein FAM227B (Fam227b), found in Rattus norvegicus (Rat).